The following is a 273-amino-acid chain: Sulfur carrier protein FdhD (273 aa).

Cysteine 124 acts as the Cysteine persulfide intermediate in catalysis. Mo-bis(molybdopterin guanine dinucleotide) is bound at residue 263-268 (FCRQSR).

It belongs to the FdhD family.

It localises to the cytoplasm. Its function is as follows. Required for formate dehydrogenase (FDH) activity. Acts as a sulfur carrier protein that transfers sulfur from IscS to the molybdenum cofactor prior to its insertion into FDH. In Acinetobacter baylyi (strain ATCC 33305 / BD413 / ADP1), this protein is Sulfur carrier protein FdhD.